Reading from the N-terminus, the 547-residue chain is Chaperonin GroEL (547 aa).

ATP is bound by residues 30–33 (TLGP), Lys-51, 87–91 (DGTTT), Gly-415, and Asp-496.

It belongs to the chaperonin (HSP60) family. As to quaternary structure, forms a cylinder of 14 subunits composed of two heptameric rings stacked back-to-back. Interacts with the co-chaperonin GroES.

The protein localises to the cytoplasm. The enzyme catalyses ATP + H2O + a folded polypeptide = ADP + phosphate + an unfolded polypeptide.. In terms of biological role, together with its co-chaperonin GroES, plays an essential role in assisting protein folding. The GroEL-GroES system forms a nano-cage that allows encapsulation of the non-native substrate proteins and provides a physical environment optimized to promote and accelerate protein folding. In Mannheimia succiniciproducens (strain KCTC 0769BP / MBEL55E), this protein is Chaperonin GroEL.